Here is a 630-residue protein sequence, read N- to C-terminus: Pentatricopeptide repeat-containing protein At1g62670, mitochondrial (630 aa).

The N-terminal 22 residues, 1–22, are a transit peptide targeting the mitochondrion; that stretch reads MRISFAIASTAKRFVHRSLVVR. PPR repeat units lie at residues 44-79, 80-114, 115-149, 150-184, 185-219, 220-254, 255-289, 290-324, 325-359, 360-394, 395-429, 430-464, 465-499, 500-534, 535-569, and 570-604; these read TSYD…RPFP, SIIE…GIPH, NHYT…GYEP, NIVT…GYQP, NTVT…GCQP, DLVT…KLEP, GVLI…GIRP, NVVT…KINP, DVFT…SIDP, SIVT…HCFP, DVVT…GLVG, NTVT…GVPP, NIMT…KMEP, TIYT…GVKP, DVVA…GTLP, and NSGC…GFAG.

It belongs to the PPR family. P subfamily.

The protein resides in the mitochondrion. The chain is Pentatricopeptide repeat-containing protein At1g62670, mitochondrial from Arabidopsis thaliana (Mouse-ear cress).